The chain runs to 932 residues: 2-oxoglutarate dehydrogenase E1 component (932 aa).

It belongs to the alpha-ketoglutarate dehydrogenase family. As to quaternary structure, homodimer. Part of the 2-oxoglutarate dehydrogenase (OGDH) complex composed of E1 (2-oxoglutarate dehydrogenase), E2 (dihydrolipoamide succinyltransferase) and E3 (dihydrolipoamide dehydrogenase); the complex contains multiple copies of the three enzymatic components (E1, E2 and E3). Thiamine diphosphate serves as cofactor.

It carries out the reaction N(6)-[(R)-lipoyl]-L-lysyl-[protein] + 2-oxoglutarate + H(+) = N(6)-[(R)-S(8)-succinyldihydrolipoyl]-L-lysyl-[protein] + CO2. E1 component of the 2-oxoglutarate dehydrogenase (OGDH) complex which catalyzes the decarboxylation of 2-oxoglutarate, the first step in the conversion of 2-oxoglutarate to succinyl-CoA and CO(2). This Staphylococcus aureus (strain MRSA252) protein is 2-oxoglutarate dehydrogenase E1 component.